The following is a 1107-amino-acid chain: Protein translocase subunit SecA (1107 aa).

Residues Gln-169, 187–191, and Asp-688 each bind ATP; that span reads GEGKT. The span at 1036-1066 shows a compositional bias: basic and acidic residues; sequence RHAAEQRTDMSKYRTQKDDIEAQQKAQRDAA. A disordered region spans residues 1036-1107; sequence RHAAEQRTDM…KFKQCHGRNL (72 aa). Cys-1091, Cys-1093, Cys-1102, and His-1103 together coordinate Zn(2+). Over residues 1097 to 1107 the composition is skewed to basic residues; the sequence is KKFKQCHGRNL.

This sequence belongs to the SecA family. As to quaternary structure, monomer and homodimer. Part of the essential Sec protein translocation apparatus which comprises SecA, SecYEG and auxiliary proteins SecDF. Other proteins may also be involved. The cofactor is Zn(2+).

The protein localises to the cell inner membrane. Its subcellular location is the cytoplasm. It carries out the reaction ATP + H2O + cellular proteinSide 1 = ADP + phosphate + cellular proteinSide 2.. Part of the Sec protein translocase complex. Interacts with the SecYEG preprotein conducting channel. Has a central role in coupling the hydrolysis of ATP to the transfer of proteins into and across the cell membrane, serving as an ATP-driven molecular motor driving the stepwise translocation of polypeptide chains across the membrane. The protein is Protein translocase subunit SecA of Porphyromonas gingivalis (strain ATCC BAA-308 / W83).